Reading from the N-terminus, the 101-residue chain is Trp operon repressor homolog (101 aa).

The DNA-binding element occupies 59 to 82; the sequence is QREIQQNLSTSAATITRGSNMLKM.

This sequence belongs to the TrpR family. In terms of assembly, homodimer.

Its subcellular location is the cytoplasm. This protein is an aporepressor. When complexed with L-tryptophan it binds the operator region of the trp operon and prevents the initiation of transcription. The protein is Trp operon repressor homolog of Actinobacillus succinogenes (strain ATCC 55618 / DSM 22257 / CCUG 43843 / 130Z).